Consider the following 290-residue polypeptide: D-tagatose 3-epimerase (290 aa).

Position 66 (Cys-66) interacts with substrate. Glu-152 functions as the Proton donor/acceptor in the catalytic mechanism. Glu-152 serves as a coordination point for Mn(2+). Residues Glu-158 and 185-188 (DTFH) contribute to the substrate site. Mn(2+)-binding residues include Asp-185 and His-211. Arg-217 is a binding site for substrate. Catalysis depends on Glu-246, which acts as the Proton donor/acceptor. Glu-246 is a Mn(2+) binding site.

It belongs to the hyi family. In terms of assembly, homodimer. Mn(2+) serves as cofactor.

The catalysed reaction is keto-D-tagatose = keto-D-sorbose. The enzyme catalyses D-allulose = keto-D-fructose. It carries out the reaction D-ribulose = D-xylulose. With respect to regulation, strongly inhibited (about 90% of the enzyme activity) by Ag(+), Hg(2+) and p-chloromercuribenzoic acid. Cu(2+) and Zn(2+) inhibit about 60% of the enzyme activity. Its function is as follows. Catalyzes the epimerization of various ketoses at the C(3) position. It is able to interconvert D-tagatose and D-ribulose to D-sorbose and D-xylulose, respectively. The enzyme is also able to accept other ketopentoses such as D-psicose with lower efficiency. The sequence is that of D-tagatose 3-epimerase from Pseudomonas cichorii.